A 304-amino-acid chain; its full sequence is Porphobilinogen deaminase (304 aa).

The residue at position 240 (Cys240) is an S-(dipyrrolylmethanemethyl)cysteine.

This sequence belongs to the HMBS family. Monomer. Dipyrromethane is required as a cofactor.

The enzyme catalyses 4 porphobilinogen + H2O = hydroxymethylbilane + 4 NH4(+). The protein operates within porphyrin-containing compound metabolism; protoporphyrin-IX biosynthesis; coproporphyrinogen-III from 5-aminolevulinate: step 2/4. Functionally, tetrapolymerization of the monopyrrole PBG into the hydroxymethylbilane pre-uroporphyrinogen in several discrete steps. The chain is Porphobilinogen deaminase from Xanthomonas campestris pv. campestris (strain B100).